We begin with the raw amino-acid sequence, 393 residues long: Phosphoglycerate kinase (393 aa).

Substrate contacts are provided by residues 22–24, arginine 37, 60–63, arginine 119, and arginine 152; these read DFN and HLGR. ATP is bound by residues lysine 202, glycine 293, glutamate 324, and 350 to 353; that span reads GGDS.

Belongs to the phosphoglycerate kinase family. In terms of assembly, monomer.

The protein localises to the cytoplasm. It carries out the reaction (2R)-3-phosphoglycerate + ATP = (2R)-3-phospho-glyceroyl phosphate + ADP. It participates in carbohydrate degradation; glycolysis; pyruvate from D-glyceraldehyde 3-phosphate: step 2/5. The polypeptide is Phosphoglycerate kinase (Borreliella afzelii (strain PKo) (Borrelia afzelii)).